Consider the following 458-residue polypeptide: tRNA modification GTPase MnmE (458 aa).

Residues Arg-22, Glu-84, and Arg-123 each contribute to the (6S)-5-formyl-5,6,7,8-tetrahydrofolate site. One can recognise a TrmE-type G domain in the interval 220–379; that stretch reads GIATAIIGRP…LEKAIADLFF (160 aa). Asn-230 contributes to the K(+) binding site. Residues 230–235, 249–255, and 274–277 contribute to the GTP site; these read NVGKSS, TDIAGTT, and DTAG. Residue Ser-234 participates in Mg(2+) binding. K(+) contacts are provided by Thr-249, Ile-251, and Thr-254. Position 255 (Thr-255) interacts with Mg(2+). A (6S)-5-formyl-5,6,7,8-tetrahydrofolate-binding site is contributed by Lys-458.

It belongs to the TRAFAC class TrmE-Era-EngA-EngB-Septin-like GTPase superfamily. TrmE GTPase family. As to quaternary structure, homodimer. Heterotetramer of two MnmE and two MnmG subunits. Requires K(+) as cofactor.

It is found in the cytoplasm. In terms of biological role, exhibits a very high intrinsic GTPase hydrolysis rate. Involved in the addition of a carboxymethylaminomethyl (cmnm) group at the wobble position (U34) of certain tRNAs, forming tRNA-cmnm(5)s(2)U34. This is tRNA modification GTPase MnmE from Bacillus cytotoxicus (strain DSM 22905 / CIP 110041 / 391-98 / NVH 391-98).